Consider the following 444-residue polypeptide: Alpha-1,3-mannosyl-glycoprotein 2-beta-N-acetylglucosaminyltransferase (444 aa).

The Cytoplasmic portion of the chain corresponds to 1 to 6; sequence MARISC. Residues 7 to 24 traverse the membrane as a helical; Signal-anchor for type II membrane protein segment; it reads DLRFLLIPAAFMFIYIQM. Residues 25–444 are Lumenal-facing; that stretch reads RLFQTQSQYA…SVMQLGIRNS (420 aa). The stretch at 61-92 forms a coiled coil; the sequence is KQSRIVALEDMKNRQDEELVQLKDLIQTFEKK. Residues Arg-115, Asp-144, His-188, and Asp-210 each contribute to the substrate site. Mn(2+) is bound at residue Asp-211. Asp-287 (proton acceptor) is an active-site residue. A substrate-binding site is contributed by Ser-318. A glycan (N-linked (GlcNAc...) asparagine) is linked at Asn-351.

This sequence belongs to the glycosyltransferase 13 family. The cofactor is Mn(2+). In terms of processing, glycosylated. Expressed in roots, stems, leaves and flowers.

It is found in the golgi apparatus membrane. It catalyses the reaction N(4)-(alpha-D-Man-(1-&gt;3)-[alpha-D-Man-(1-&gt;3)-[alpha-D-Man-(1-&gt;6)]-alpha-D-Man-(1-&gt;6)]-beta-D-Man-(1-&gt;4)-beta-D-GlcNAc-(1-&gt;4)-beta-D-GlcNAc)-L-asparaginyl-[protein] (N-glucan mannose isomer 5A1,2) + UDP-N-acetyl-alpha-D-glucosamine = N(4)-{beta-D-GlcNAc-(1-&gt;2)-alpha-D-Man-(1-&gt;3)-[alpha-D-Man-(1-&gt;3)-[alpha-D-Man-(1-&gt;6)]-alpha-D-Man-(1-&gt;6)]-beta-D-Man-(1-&gt;4)-beta-D-GlcNAc-(1-&gt;4)-beta-D-GlcNAc}-L-asparaginyl-[protein] + UDP + H(+). It functions in the pathway protein modification; protein glycosylation. In terms of biological role, initiates complex N-linked carbohydrate formation. Essential for the conversion of high-mannose to hybrid and complex N-glycans. Required for normal root growth and morphology. In Arabidopsis thaliana (Mouse-ear cress), this protein is Alpha-1,3-mannosyl-glycoprotein 2-beta-N-acetylglucosaminyltransferase.